The chain runs to 102 residues: NADH-quinone oxidoreductase subunit K 2 (102 aa).

A run of 3 helical transmembrane segments spans residues 1 to 21 (MIVP…LGLV), 30 to 50 (IIMM…AFVG), and 65 to 85 (LMIM…VVYL).

This sequence belongs to the complex I subunit 4L family. As to quaternary structure, NDH-1 is composed of 14 different subunits. Subunits NuoA, H, J, K, L, M, N constitute the membrane sector of the complex.

It localises to the cell inner membrane. The enzyme catalyses a quinone + NADH + 5 H(+)(in) = a quinol + NAD(+) + 4 H(+)(out). In terms of biological role, NDH-1 shuttles electrons from NADH, via FMN and iron-sulfur (Fe-S) centers, to quinones in the respiratory chain. The immediate electron acceptor for the enzyme in this species is believed to be ubiquinone. Couples the redox reaction to proton translocation (for every two electrons transferred, four hydrogen ions are translocated across the cytoplasmic membrane), and thus conserves the redox energy in a proton gradient. The protein is NADH-quinone oxidoreductase subunit K 2 of Geotalea daltonii (strain DSM 22248 / JCM 15807 / FRC-32) (Geobacter daltonii).